The following is a 244-amino-acid chain: Sortase B (244 aa).

The Cytoplasmic segment spans residues 1-6 (MRMKRF). Residues 7-24 (LTIVQILLVVIIIIFGYK) traverse the membrane as a helical segment. Residues 25 to 244 (IVQTYIEDKQ…VVVAKIIKVS (220 aa)) lie on the Extracellular side of the membrane. The active-site Acyl-thioester intermediate is the C223.

It belongs to the bacterial sortase family. Class B subfamily.

The protein localises to the cell membrane. The catalysed reaction is The enzyme catalyzes a cell wall sorting reaction in which a surface protein with a sorting signal containing a NPXTN motif is cleaved between the Thr and Asn residue. The resulting threonine carboxyl end of the protein is covalently attached to a pentaglycine cross-bridge of peptidoglycan.. Its activity is regulated as follows. Inhibited by MTSET (2-(Trimethylammonium)-ethyl-methanethiosulfonate) and E64 ([n- (l-3-trans-carboxyoxirane-2-carbonyl)-l-leucyl]-amido(4-guanido)butane). Inhibited by coptisine. In terms of biological role, transpeptidase that anchors surface proteins to the cell wall. Recognizes and modifies its substrate by proteolytic cleavage of a C-terminal sorting signal. Following cleavage, a covalent intermediate is formed via a thioester bond between the sortase and its substrate, which is then transferred and covalently attached to the cell wall. This sortase recognizes an Asn-Pro-Gln-Thr-Asn (NPQTN) motif in IsdC, which is cleaved by the sortase between the threonine and aspargine residues; may only have 1 substrate in this bacterium. May be dedicated to the process of iron acquisition during bacterial infection. This chain is Sortase B, found in Staphylococcus aureus (strain NCTC 8325 / PS 47).